We begin with the raw amino-acid sequence, 385 residues long: GDSL esterase/lipase At5g08460 (385 aa).

Residues 1–35 form the signal peptide; sequence MHDSEIFKFKDMMMMSCTVQTLVLVPWFLVVFVLA. The active-site Nucleophile is S56. Residues N218 and N285 are each glycosylated (N-linked (GlcNAc...) asparagine). Catalysis depends on residues D350 and H353. Residues N368 and N378 are each glycosylated (N-linked (GlcNAc...) asparagine).

The protein belongs to the 'GDSL' lipolytic enzyme family.

It localises to the secreted. The sequence is that of GDSL esterase/lipase At5g08460 from Arabidopsis thaliana (Mouse-ear cress).